Here is a 577-residue protein sequence, read N- to C-terminus: DNA primase (577 aa).

The CHC2-type zinc finger occupies 40–64 (CPFHHDKTPSFTVSNEKQFYYCFGC). One can recognise a Toprim domain in the interval 255–337 (VYLLVVEGYI…KKTLKFILLP (83 aa)). Residues glutamate 261, aspartate 305, and aspartate 307 each coordinate Mg(2+).

It belongs to the DnaG primase family. As to quaternary structure, monomer. Interacts with DnaB. Zn(2+) serves as cofactor. Requires Mg(2+) as cofactor.

The catalysed reaction is ssDNA + n NTP = ssDNA/pppN(pN)n-1 hybrid + (n-1) diphosphate.. RNA polymerase that catalyzes the synthesis of short RNA molecules used as primers for DNA polymerase during DNA replication. The chain is DNA primase from Buchnera aphidicola subsp. Acyrthosiphon pisum (strain APS) (Acyrthosiphon pisum symbiotic bacterium).